The following is a 147-amino-acid chain: Small ribosomal subunit protein eS19 (147 aa).

This sequence belongs to the eukaryotic ribosomal protein eS19 family. As to quaternary structure, part of the 30S ribosomal subunit.

May be involved in maturation of the 30S ribosomal subunit. The protein is Small ribosomal subunit protein eS19 of Archaeoglobus fulgidus (strain ATCC 49558 / DSM 4304 / JCM 9628 / NBRC 100126 / VC-16).